Consider the following 256-residue polypeptide: tRNA pseudouridine synthase A (256 aa).

Asp43 (nucleophile) is an active-site residue. Residue Tyr94 participates in substrate binding.

Belongs to the tRNA pseudouridine synthase TruA family.

The enzyme catalyses uridine(38/39/40) in tRNA = pseudouridine(38/39/40) in tRNA. Formation of pseudouridine at positions 38, 39 and 40 in the anticodon stem and loop of transfer RNAs. This Pyrobaculum aerophilum (strain ATCC 51768 / DSM 7523 / JCM 9630 / CIP 104966 / NBRC 100827 / IM2) protein is tRNA pseudouridine synthase A.